The chain runs to 936 residues: Protein translocase subunit SecA (936 aa).

Residues Gln87, 105 to 109 (GEGKT), and Asp515 contribute to the ATP site. The Zn(2+) site is built by Cys920, Cys922, Cys931, and His932.

It belongs to the SecA family. As to quaternary structure, monomer and homodimer. Part of the essential Sec protein translocation apparatus which comprises SecA, SecYEG and auxiliary proteins SecDF-YajC and YidC. Zn(2+) is required as a cofactor.

The protein localises to the cell inner membrane. The protein resides in the cytoplasm. It catalyses the reaction ATP + H2O + cellular proteinSide 1 = ADP + phosphate + cellular proteinSide 2.. Part of the Sec protein translocase complex. Interacts with the SecYEG preprotein conducting channel. Has a central role in coupling the hydrolysis of ATP to the transfer of proteins into and across the cell membrane, serving both as a receptor for the preprotein-SecB complex and as an ATP-driven molecular motor driving the stepwise translocation of polypeptide chains across the membrane. The sequence is that of Protein translocase subunit SecA from Paraburkholderia phymatum (strain DSM 17167 / CIP 108236 / LMG 21445 / STM815) (Burkholderia phymatum).